Here is a 279-residue protein sequence, read N- to C-terminus: MSWDDDDFDVPATKTAGVSWEDEDNDDPLLESWDIDEEEVARKKKEEEAKKKAEKEALKQKQQEAKNKKLSQKSGERKLLDIDLIDEETRQELLRKAQVTSDLNNAADLFGGLGVANDDDFDVNEHPRERAAKLAAAKQAAKPAAPRLTRDSPLEMHPLFQPTDKAEYEKLRKALATSLQQLAEDSPLNYSSALGIDLIRDAAQPLSLENVRKVISTLNVIVKDKERAERQARLKKAGGTATGGAGKKKAKPAVKTNVSDMYKKDAGDDFDDFDDDDFM.

Disordered stretches follow at residues 1 to 74 (MSWD…SQKS) and 229 to 279 (ERQA…DDFM). Acidic residues predominate over residues 20 to 39 (WEDEDNDDPLLESWDIDEEE). A coiled-coil region spans residues 34–74 (DIDEEEVARKKKEEEAKKKAEKEALKQKQQEAKNKKLSQKS). Over residues 40–67 (VARKKKEEEAKKKAEKEALKQKQQEAKN) the composition is skewed to basic and acidic residues. The span at 268–279 (DDFDDFDDDDFM) shows a compositional bias: acidic residues.

It belongs to the eIF-3 subunit J family. In terms of assembly, component of the eukaryotic translation initiation factor 3 (eIF-3) complex.

It localises to the cytoplasm. Its function is as follows. Component of the eukaryotic translation initiation factor 3 (eIF-3) complex, which is involved in protein synthesis of a specialized repertoire of mRNAs and, together with other initiation factors, stimulates binding of mRNA and methionyl-tRNAi to the 40S ribosome. The eIF-3 complex specifically targets and initiates translation of a subset of mRNAs involved in cell proliferation. This Meyerozyma guilliermondii (strain ATCC 6260 / CBS 566 / DSM 6381 / JCM 1539 / NBRC 10279 / NRRL Y-324) (Yeast) protein is Eukaryotic translation initiation factor 3 subunit J.